The following is a 500-amino-acid chain: Probable cytosol aminopeptidase (500 aa).

Mn(2+)-binding residues include K261 and D266. K273 is a catalytic residue. Mn(2+)-binding residues include D284, D343, and E345. R347 is an active-site residue.

Belongs to the peptidase M17 family. Mn(2+) is required as a cofactor.

It localises to the cytoplasm. The enzyme catalyses Release of an N-terminal amino acid, Xaa-|-Yaa-, in which Xaa is preferably Leu, but may be other amino acids including Pro although not Arg or Lys, and Yaa may be Pro. Amino acid amides and methyl esters are also readily hydrolyzed, but rates on arylamides are exceedingly low.. The catalysed reaction is Release of an N-terminal amino acid, preferentially leucine, but not glutamic or aspartic acids.. Presumably involved in the processing and regular turnover of intracellular proteins. Catalyzes the removal of unsubstituted N-terminal amino acids from various peptides. The sequence is that of Probable cytosol aminopeptidase from Wolbachia pipientis wMel.